The primary structure comprises 333 residues: Perchlorate reductase subunit beta (333 aa).

Residues 12-40 (LTYVTDLNKCIGCQTCTVACKKLWTTGPG) enclose the 4Fe-4S ferredoxin-type 1 domain. Cys21, Cys24, Cys27, and Cys31 together coordinate [4Fe-4S] cluster. Residues 101–121 (KERVRPSPTPRSAPNWDEDQG) are disordered. 4Fe-4S ferredoxin-type domains are found at residues 128-159 (NSFF…KREQ) and 161-190 (GIVV…FNPV). Cys137, Cys140, and Cys145 together coordinate [4Fe-4S] cluster. Residues Cys149, Cys170, and Cys176 each contribute to the [3Fe-4S] cluster site. [4Fe-4S] cluster-binding residues include Cys180, Cys197, Cys200, Cys212, and Cys216.

As to quaternary structure, heterotrimer of alpha, beta and gamma subunits. The cofactor is [3Fe-4S] cluster. [4Fe-4S] cluster is required as a cofactor.

The protein resides in the periplasm. Component of the perchlorate reductase that catalyzes the reduction of perchlorate to chlorite and allows anaerobic growth on perchlorate as the sole electron acceptor. The beta subunit may be responsible for electron transfer to the catalytic alpha subunit PcrA. The chain is Perchlorate reductase subunit beta (pcrB) from Dechloromonas aromatica (strain RCB).